The sequence spans 103 residues: Phosphoribosyl-ATP pyrophosphatase (103 aa).

Residues 84–103 (LQSREGKLSKTSDRKEINDL) are disordered.

This sequence belongs to the PRA-PH family.

The protein localises to the cytoplasm. The catalysed reaction is 1-(5-phospho-beta-D-ribosyl)-ATP + H2O = 1-(5-phospho-beta-D-ribosyl)-5'-AMP + diphosphate + H(+). The protein operates within amino-acid biosynthesis; L-histidine biosynthesis; L-histidine from 5-phospho-alpha-D-ribose 1-diphosphate: step 2/9. The sequence is that of Phosphoribosyl-ATP pyrophosphatase (hisE) from Listeria innocua serovar 6a (strain ATCC BAA-680 / CLIP 11262).